The sequence spans 226 residues: Urease accessory protein UreE (226 aa).

The segment at 192-226 is disordered; that stretch reads PHGSGLHIHSIHSHGDGHSHDHDHSHGDHDSDHKH. Basic and acidic residues predominate over residues 204-226; it reads SHGDGHSHDHDHSHGDHDSDHKH.

It belongs to the UreE family.

It is found in the cytoplasm. In terms of biological role, involved in urease metallocenter assembly. Binds nickel. Probably functions as a nickel donor during metallocenter assembly. In Yersinia intermedia, this protein is Urease accessory protein UreE.